Consider the following 263-residue polypeptide: Neurogenin-2 (263 aa).

Residues 20-76 form a disordered region; that stretch reads LGSASPASATLTPMSSSADEEEDEELRRPGSARGQRGAEAEQGVQGSPASGAGGCRP. Residues 24–36 show a composition bias toward polar residues; that stretch reads SPASATLTPMSSS. Positions 112-164 constitute a bHLH domain; sequence TRRLKANNRERNRMHNLNAALDALREVLPTFPEDAKLTKIETLRFAHNYIWAL. Positions 197–231 are enriched in low complexity; that stretch reads LGASGDSPSPPSSWSCTNSPASSSNSTSPYSCTLS. Residues 197–253 are disordered; that stretch reads LGASGDSPSPPSSWSCTNSPASSSNSTSPYSCTLSPASPGSDVDYWQPPPPEKHRYA.

As to quaternary structure, efficient DNA binding requires dimerization with another bHLH protein.

It localises to the nucleus. Its function is as follows. Transcriptional regulator. Involved in neuronal differentiation. Activates transcription by binding to the E box (5'-CANNTG-3'). The chain is Neurogenin-2 (Neurog2) from Mus musculus (Mouse).